The chain runs to 264 residues: Somatomedin-B and thrombospondin type-1 domain-containing protein (264 aa).

The first 20 residues, 1-20 (MRTLWMALCVLARLWPGALA), serve as a signal peptide directing secretion. One can recognise an SMB domain in the interval 24-75 (DAGRCCPGRDPACFASGWRQDRVYGTCFCDQACRLTGDCCFDYARACPARPC). Intrachain disulfides connect Cys28-Cys36, Cys28-Cys52, Cys36-Cys70, Cys50-Cys52, Cys50-Cys63, Cys56-Cys62, and Cys63-Cys70. The TSP type-1 domain maps to 74-127 (PCIVGEWSPWSGCASQCRPTARVRRRAVQQEPQNGGEPCPALEERAGCLEYATP). N-linked (GlcNAc...) asparagine glycosylation is present at Asn227.

Belongs to the thrombospondin family.

The protein localises to the secreted. It localises to the extracellular space. Its subcellular location is the extracellular matrix. The chain is Somatomedin-B and thrombospondin type-1 domain-containing protein (SBSPON) from Bos taurus (Bovine).